Reading from the N-terminus, the 25-residue chain is Small ribosomal subunit protein eS32 (25 aa).

The segment at 1-25 (MRAKWRKKRMRRLKRKRRKMRQRSK) is disordered.

It belongs to the eukaryotic ribosomal protein eS32 family. In terms of assembly, component of the large ribosomal subunit.

The protein localises to the cytoplasm. Component of the small ribosomal subunit. The ribosome is a large ribonucleoprotein complex responsible for the synthesis of proteins in the cell. In Cyprinus carpio (Common carp), this protein is Small ribosomal subunit protein eS32 (rpl41).